Here is a 457-residue protein sequence, read N- to C-terminus: Serine--tRNA ligase (457 aa).

252 to 254 is a binding site for L-serine; sequence TAE. Residues 283–285 and Val299 each bind ATP; that span reads RKE. Glu306 serves as a coordination point for L-serine. 370 to 373 is an ATP binding site; it reads EMVS. Thr406 serves as a coordination point for L-serine.

This sequence belongs to the class-II aminoacyl-tRNA synthetase family. Type-1 seryl-tRNA synthetase subfamily. Homodimer. The tRNA molecule binds across the dimer.

It is found in the cytoplasm. The catalysed reaction is tRNA(Ser) + L-serine + ATP = L-seryl-tRNA(Ser) + AMP + diphosphate + H(+). It catalyses the reaction tRNA(Sec) + L-serine + ATP = L-seryl-tRNA(Sec) + AMP + diphosphate + H(+). It functions in the pathway aminoacyl-tRNA biosynthesis; selenocysteinyl-tRNA(Sec) biosynthesis; L-seryl-tRNA(Sec) from L-serine and tRNA(Sec): step 1/1. Its function is as follows. Catalyzes the attachment of serine to tRNA(Ser). Is also able to aminoacylate tRNA(Sec) with serine, to form the misacylated tRNA L-seryl-tRNA(Sec), which will be further converted into selenocysteinyl-tRNA(Sec). This is Serine--tRNA ligase from Saccharolobus islandicus (strain Y.N.15.51 / Yellowstone #2) (Sulfolobus islandicus).